The following is a 280-amino-acid chain: MDFMKPETVLDLGNIRDALVRMEDTIIFNFIERSQFYASPSVYKVNQFPIPNFDGSFLDWLLSQHERIHSQVRRYDAPDEVPFFPNVLEKTFLPKINYPSVLASYADEINVNKEILKIYTSEIVPGIAAGSGEQEDNLGSCAMADIECLQSLSRRIHFGRFVAEAKFISEGDKIVDLIKKRDVEGIEALITNAEVEKRILDRLLEKGRAYGTDPTLKFTQHIQSKVKPEVIVKIYKDFVIPLTKKVEVDYLLRRLEDEEDDDATQKSGGYVDRFLSSGLY.

A Chorismate mutase domain is found at 3–256 (FMKPETVLDL…EVDYLLRRLE (254 aa)). 5 residues coordinate L-tyrosine: Arg73, Arg74, Asn137, Gly139, and Ser140. The L-tryptophan site is built by Asn137, Gly139, and Ser140.

In terms of assembly, homodimer.

The protein localises to the cytoplasm. The enzyme catalyses chorismate = prephenate. The protein operates within metabolic intermediate biosynthesis; prephenate biosynthesis; prephenate from chorismate: step 1/1. Its activity is regulated as follows. Each dimer has two allosteric binding sites that can bind the regulatory effectors tryptophan or tyrosine. Can bind either one tryptophan or one tyrosine, two tryptophan or two tyrosine or one tryptophan and one tyrosine, which differentially affect the catalytic activity. Activated by tryptophan and subject to feedback inhibition by tyrosine. In the presence of both tryptophan and tyrosine, the enzyme is in the activated state. Its function is as follows. Catalyzes the Claisen rearrangement of chorismate to prephenate. Acts at the first branch point in the aromatic amino acid pathway where it steers biosynthesis towards phenylalanine and tyrosine, and away from tryptophan. This is Chorismate mutase from Pichia angusta (Yeast).